We begin with the raw amino-acid sequence, 120 residues long: UPF0231 protein KPN78578_01240 (120 aa).

The protein belongs to the UPF0231 family.

The chain is UPF0231 protein KPN78578_01240 from Klebsiella pneumoniae subsp. pneumoniae (strain ATCC 700721 / MGH 78578).